Reading from the N-terminus, the 262-residue chain is 14-3-3-like protein B (262 aa).

This sequence belongs to the 14-3-3 family.

In Hordeum vulgare (Barley), this protein is 14-3-3-like protein B.